Here is a 445-residue protein sequence, read N- to C-terminus: UPF0210 protein SZO_15840 (445 aa).

Belongs to the UPF0210 family. Homodimer.

This Streptococcus equi subsp. zooepidemicus (strain H70) protein is UPF0210 protein SZO_15840.